The chain runs to 334 residues: UDP-N-acetylglucosamine--N-acetylmuramyl-(pentapeptide) pyrophosphoryl-undecaprenol N-acetylglucosamine transferase (334 aa).

UDP-N-acetyl-alpha-D-glucosamine-binding positions include 11 to 13 (TGG), N125, S185, I229, and Q274.

This sequence belongs to the glycosyltransferase 28 family. MurG subfamily.

Its subcellular location is the cell inner membrane. The enzyme catalyses di-trans,octa-cis-undecaprenyl diphospho-N-acetyl-alpha-D-muramoyl-L-alanyl-D-glutamyl-meso-2,6-diaminopimeloyl-D-alanyl-D-alanine + UDP-N-acetyl-alpha-D-glucosamine = di-trans,octa-cis-undecaprenyl diphospho-[N-acetyl-alpha-D-glucosaminyl-(1-&gt;4)]-N-acetyl-alpha-D-muramoyl-L-alanyl-D-glutamyl-meso-2,6-diaminopimeloyl-D-alanyl-D-alanine + UDP + H(+). It functions in the pathway cell wall biogenesis; peptidoglycan biosynthesis. Cell wall formation. Catalyzes the transfer of a GlcNAc subunit on undecaprenyl-pyrophosphoryl-MurNAc-pentapeptide (lipid intermediate I) to form undecaprenyl-pyrophosphoryl-MurNAc-(pentapeptide)GlcNAc (lipid intermediate II). The sequence is that of UDP-N-acetylglucosamine--N-acetylmuramyl-(pentapeptide) pyrophosphoryl-undecaprenol N-acetylglucosamine transferase from Thermosipho melanesiensis (strain DSM 12029 / CIP 104789 / BI429).